We begin with the raw amino-acid sequence, 307 residues long: Carbamate kinase (307 aa).

It belongs to the carbamate kinase family.

Its subcellular location is the cytoplasm. It carries out the reaction hydrogencarbonate + NH4(+) + ATP = carbamoyl phosphate + ADP + H2O + H(+). The protein operates within metabolic intermediate metabolism; carbamoyl phosphate degradation; CO(2) and NH(3) from carbamoyl phosphate: step 1/1. Its function is as follows. Carbamate kinase involved in the arginine deiminase pathway of fermentative arginine utilization. The protein is Carbamate kinase (arcC) of Halobacterium salinarum (strain ATCC 700922 / JCM 11081 / NRC-1) (Halobacterium halobium).